A 150-amino-acid chain; its full sequence is 3-hydroxyacyl-[acyl-carrier-protein] dehydratase FabZ (150 aa).

The active site involves His54.

This sequence belongs to the thioester dehydratase family. FabZ subfamily.

It is found in the cytoplasm. The catalysed reaction is a (3R)-hydroxyacyl-[ACP] = a (2E)-enoyl-[ACP] + H2O. In terms of biological role, involved in unsaturated fatty acids biosynthesis. Catalyzes the dehydration of short chain beta-hydroxyacyl-ACPs and long chain saturated and unsaturated beta-hydroxyacyl-ACPs. The sequence is that of 3-hydroxyacyl-[acyl-carrier-protein] dehydratase FabZ from Psychromonas ingrahamii (strain DSM 17664 / CCUG 51855 / 37).